Here is a 359-residue protein sequence, read N- to C-terminus: Endoglucanase (359 aa).

An N-terminal signal peptide occupies residues 1-23 (MPLRALVAVIVTTAVMLVPRAWA). E53 acts as the Proton donor in catalysis. The Nucleophile role is filled by D110.

The protein belongs to the glycosyl hydrolase 8 (cellulase D) family.

It carries out the reaction Endohydrolysis of (1-&gt;4)-beta-D-glucosidic linkages in cellulose, lichenin and cereal beta-D-glucans.. In terms of biological role, the biological conversion of cellulose to glucose generally requires three types of hydrolytic enzymes: (1) Endoglucanases which cut internal beta-1,4-glucosidic bonds; (2) Exocellobiohydrolases that cut the disaccharide cellobiose from the non-reducing end of the cellulose polymer chain; (3) Beta-1,4-glucosidases which hydrolyze the cellobiose and other short cello-oligosaccharides to glucose. This is Endoglucanase from Cellulomonas uda.